Here is a 90-residue protein sequence, read N- to C-terminus: Small ribosomal subunit protein bS16 (90 aa).

It belongs to the bacterial ribosomal protein bS16 family.

The protein is Small ribosomal subunit protein bS16 of Heliobacterium modesticaldum (strain ATCC 51547 / Ice1).